The primary structure comprises 313 residues: Porphobilinogen deaminase (313 aa).

Position 241 is an S-(dipyrrolylmethanemethyl)cysteine (Cys241).

This sequence belongs to the HMBS family. As to quaternary structure, monomer. Requires dipyrromethane as cofactor.

It catalyses the reaction 4 porphobilinogen + H2O = hydroxymethylbilane + 4 NH4(+). Its pathway is porphyrin-containing compound metabolism; protoporphyrin-IX biosynthesis; coproporphyrinogen-III from 5-aminolevulinate: step 2/4. Tetrapolymerization of the monopyrrole PBG into the hydroxymethylbilane pre-uroporphyrinogen in several discrete steps. This chain is Porphobilinogen deaminase, found in Bacillus velezensis (strain DSM 23117 / BGSC 10A6 / LMG 26770 / FZB42) (Bacillus amyloliquefaciens subsp. plantarum).